We begin with the raw amino-acid sequence, 598 residues long: DNA (cytosine-5)-methyltransferase DRM2 (598 aa).

2 disordered regions span residues 1–49 (MVDW…NGKA) and 114–146 (EVDEEEDDTNWDEYDTAGNCDRTPHSDGSGDED). The UBA 1 domain occupies 42–91 (PQDANGKANGSGALVAEFMGMGFPKEMILKAIKEIGDTDTEQLLELLLTY). The segment covering 114–128 (EVDEEEDDTNWDEYD) has biased composition (acidic residues). The 45-residue stretch at 150–194 (EMSEKDEKMKSLVNMGFPEDEAKMAIDRCGLDAPVAVLVDSIYAS) folds into the UBA 2 domain. The disordered stretch occupies residues 227–252 (GSKKRKRYGSGPSGNQVPFDGSHEEP). Residues 272–598 (VHRNLPDQAL…EHVKATMSAV (327 aa)) enclose the SAM-dependent MTase DRM-type domain.

The protein belongs to the class I-like SAM-binding methyltransferase superfamily. DRM-methyltransferase family. As to quaternary structure, interacts (via UBA domains) with EIF4A.

The protein resides in the nucleus. It carries out the reaction a 2'-deoxycytidine in DNA + S-adenosyl-L-methionine = a 5-methyl-2'-deoxycytidine in DNA + S-adenosyl-L-homocysteine + H(+). Involved in de novo DNA methylation. Required for CpG and non-CpG methylation. Required for normal establishment and maintenance of RNA-directed DNA methylation (RdDM) mediated by small interfering RNAs (siRNAs). Regulates proper plant development in both vegetative and reproductive stages through DNA methylation. The polypeptide is DNA (cytosine-5)-methyltransferase DRM2 (Oryza sativa subsp. japonica (Rice)).